The chain runs to 619 residues: Chaperone protein HscA homolog (619 aa).

The protein belongs to the heat shock protein 70 family.

In terms of biological role, chaperone involved in the maturation of iron-sulfur cluster-containing proteins. Has a low intrinsic ATPase activity which is markedly stimulated by HscB. This chain is Chaperone protein HscA homolog, found in Acinetobacter baumannii (strain ACICU).